The primary structure comprises 454 residues: Cobyrinate a,c-diamide synthase (454 aa).

A GATase cobBQ-type domain is found at 247–442 (KIGIAMDSAF…IHAHWASNPN (196 aa)). Cys-329 acts as the Nucleophile in catalysis.

The protein belongs to the CobB/CbiA family. It depends on Mg(2+) as a cofactor.

It catalyses the reaction cob(II)yrinate + 2 L-glutamine + 2 ATP + 2 H2O = cob(II)yrinate a,c diamide + 2 L-glutamate + 2 ADP + 2 phosphate + 2 H(+). Its pathway is cofactor biosynthesis; adenosylcobalamin biosynthesis; cob(II)yrinate a,c-diamide from sirohydrochlorin (anaerobic route): step 10/10. Functionally, catalyzes the ATP-dependent amidation of the two carboxylate groups at positions a and c of cobyrinate, using either L-glutamine or ammonia as the nitrogen source. The protein is Cobyrinate a,c-diamide synthase of Leptospira interrogans serogroup Icterohaemorrhagiae serovar Lai (strain 56601).